Reading from the N-terminus, the 101-residue chain is Signal recognition particle 19 kDa protein (101 aa).

This sequence belongs to the SRP19 family. As to quaternary structure, part of the signal recognition particle protein translocation system, which is composed of SRP and FtsY. Archaeal SRP consists of a 7S RNA molecule of 300 nucleotides and two protein subunits: SRP54 and SRP19.

The protein localises to the cytoplasm. Involved in targeting and insertion of nascent membrane proteins into the cytoplasmic membrane. Binds directly to 7S RNA and mediates binding of the 54 kDa subunit of the SRP. The polypeptide is Signal recognition particle 19 kDa protein (Methanosarcina mazei (strain ATCC BAA-159 / DSM 3647 / Goe1 / Go1 / JCM 11833 / OCM 88) (Methanosarcina frisia)).